A 394-amino-acid chain; its full sequence is Protein NDRG1 (394 aa).

S2 is subject to N-acetylserine. Phosphoserine is present on residues S2, S319, and S326. The tract at residues 325-394 (RSRTASGSSV…AGPKSMEVSC (70 aa)) is disordered. Polar residues predominate over residues 327–339 (RTASGSSVTSLEG). Phosphothreonine is present on T328. Phosphoserine; by SGK1 is present on S330. A phosphoserine mark is found at S332 and S333. Residue T335 is modified to Phosphothreonine. S336 is subject to Phosphoserine. A run of 3 repeats spans residues 339 to 348 (GTRSRSHTSE), 349 to 358 (GPRSRSHTSE), and 359 to 368 (GSRSRSHTSE). Residues 339-368 (GTRSRSHTSEGPRSRSHTSEGSRSRSHTSE) are 3 X 10 AA tandem repeats of G-[PST]-R-S-R-S-H-T-S-E. Residue T340 is modified to Phosphothreonine. The residue at position 342 (S342) is a Phosphoserine. Residues 345–371 (HTSEGPRSRSHTSEGSRSRSHTSEDAR) are compositionally biased toward basic and acidic residues. T346 bears the Phosphothreonine; by SGK1 mark. S352 bears the Phosphoserine mark. T356 bears the Phosphothreonine; by SGK1 mark. 2 positions are modified to phosphoserine: S362 and S364. At T366 the chain carries Phosphothreonine; by SGK1. The span at 374-386 (ITPNSGATGNNAG) shows a compositional bias: polar residues. T375 is subject to Phosphothreonine.

Belongs to the NDRG family. In terms of assembly, interacts with RAB4A (membrane-bound form); the interaction involves NDRG1 in vesicular recycling of CDH1. Interacts with APOA1, APOA2, PRA1 and RTN1. In terms of processing, under stress conditions, phosphorylated in the C-terminal on many serine and threonine residues. Phosphorylated in vitro by PKA. Phosphorylation enhanced by increased intracellular cAMP levels. Homocysteine induces dephosphorylation. Phosphorylation by SGK1 is cell cycle dependent. As to expression, widely expressed, with highest levels in kidney followed by brain, pancreas, small intestine, colon and spleen (at protein level). Also detected in heart and preputial gland, and in much smaller quantities in other tissues. Not detected in duodenum and prostate. Highly expressed in Schwann cells.

The protein localises to the cytoplasm. It is found in the cytosol. The protein resides in the cytoskeleton. Its subcellular location is the microtubule organizing center. It localises to the centrosome. The protein localises to the nucleus. It is found in the cell membrane. In terms of biological role, stress-responsive protein involved in hormone responses, cell growth, and differentiation. Acts as a tumor suppressor in many cell types. Necessary but not sufficient for p53/TP53-mediated caspase activation and apoptosis. Required for vesicular recycling of CDH1 and TF. May also function in lipid trafficking. Protects cells from spindle disruption damage. Functions in p53/TP53-dependent mitotic spindle checkpoint. Regulates microtubule dynamics and maintains euploidy. Has a role in cell trafficking notably of the Schwann cell and is necessary for the maintenance and development of the peripheral nerve myelin sheath. The polypeptide is Protein NDRG1 (Ndrg1) (Mus musculus (Mouse)).